The chain runs to 262 residues: Acyl-[acyl-carrier-protein]--UDP-N-acetylglucosamine O-acyltransferase (262 aa).

Belongs to the transferase hexapeptide repeat family. LpxA subfamily. As to quaternary structure, homotrimer.

It localises to the cytoplasm. It catalyses the reaction a (3R)-hydroxyacyl-[ACP] + UDP-N-acetyl-alpha-D-glucosamine = a UDP-3-O-[(3R)-3-hydroxyacyl]-N-acetyl-alpha-D-glucosamine + holo-[ACP]. It participates in glycolipid biosynthesis; lipid IV(A) biosynthesis; lipid IV(A) from (3R)-3-hydroxytetradecanoyl-[acyl-carrier-protein] and UDP-N-acetyl-alpha-D-glucosamine: step 1/6. Involved in the biosynthesis of lipid A, a phosphorylated glycolipid that anchors the lipopolysaccharide to the outer membrane of the cell. In Vibrio vulnificus (strain CMCP6), this protein is Acyl-[acyl-carrier-protein]--UDP-N-acetylglucosamine O-acyltransferase.